The sequence spans 160 residues: Ribosomal RNA large subunit methyltransferase H (160 aa).

Residues Gly-108 and Phe-127 to Trp-132 contribute to the S-adenosyl-L-methionine site.

It belongs to the RNA methyltransferase RlmH family. As to quaternary structure, homodimer.

It is found in the cytoplasm. It catalyses the reaction pseudouridine(1915) in 23S rRNA + S-adenosyl-L-methionine = N(3)-methylpseudouridine(1915) in 23S rRNA + S-adenosyl-L-homocysteine + H(+). Functionally, specifically methylates the pseudouridine at position 1915 (m3Psi1915) in 23S rRNA. The polypeptide is Ribosomal RNA large subunit methyltransferase H (Bartonella bacilliformis (strain ATCC 35685 / KC583 / Herrer 020/F12,63)).